The chain runs to 365 residues: Mannose-1-phosphate guanylyltransferase catalytic subunit beta (365 aa).

Positions 2-221 are substrate-binding domain; it reads KALILVGGYG…PGFWMDVGQP (220 aa). Residue Asp109 participates in GDP-alpha-D-mannose binding. Asp109 contributes to the Mg(2+) binding site. Lys161 is an active-site residue. Asp217 contributes to the GDP-alpha-D-mannose binding site. Asp217 contributes to the Mg(2+) binding site. The hexapeptide repeat domain stretch occupies residues 244–365; it reads ETGSNIHPTA…VNVPSKDIIM (122 aa).

It belongs to the transferase hexapeptide repeat family. As to quaternary structure, component of the GMPPA-GMPPB mannose-1-phosphate guanylyltransferase complex composed of 4 GMPPA subunits and 8 tag-335/GMPPB subunits; the complex is organized into three layers, a central layer made up of 2 GMPPA dimers sandwiched between two layers each made up of 2 tag-335/GMPPB dimers. Catalytic activity of tag-335/GMPPB is reduced when part of the complex and binding of GDP-alpha-D-Mannose by GMPPA induces allosteric feedback inhibition of tag-335/GMPPB. The cofactor is Mg(2+).

It carries out the reaction alpha-D-mannose 1-phosphate + GTP + H(+) = GDP-alpha-D-mannose + diphosphate. Its pathway is nucleotide-sugar biosynthesis; GDP-alpha-D-mannose biosynthesis; GDP-alpha-D-mannose from alpha-D-mannose 1-phosphate (GTP route): step 1/1. Its activity is regulated as follows. Enzyme activity is reduced by incorporation into the GMPPA-GMPPB mannose-1-phosphate guanylyltransferase complex. Allosterically inhibited, when part of the GMPPA-GMPPB complex, by GDP-alpha-D-mannose binding to GMPPA. In terms of biological role, catalytic subunit of the GMPPA-GMPPB mannose-1-phosphate guanylyltransferase complex. Catalyzes the formation of GDP-mannose, an essential precursor of glycan moieties of glycoproteins and glycolipids. Can catalyze the reverse reaction in vitro. Together with GMPPA regulates GDP-alpha-D-mannose levels. The polypeptide is Mannose-1-phosphate guanylyltransferase catalytic subunit beta (tag-335) (Caenorhabditis elegans).